A 196-amino-acid chain; its full sequence is uncharacterized protein (196 aa).

In terms of domain architecture, HD spans 51–164 (VAEHSLLVEE…DRIFGKPDPV (114 aa)).

This is an uncharacterized protein from Rhodobacter capsulatus (strain ATCC BAA-309 / NBRC 16581 / SB1003).